The chain runs to 474 residues: Aspartyl/glutamyl-tRNA(Asn/Gln) amidotransferase subunit B (474 aa).

Belongs to the GatB/GatE family. GatB subfamily. In terms of assembly, heterotrimer of A, B and C subunits.

It carries out the reaction L-glutamyl-tRNA(Gln) + L-glutamine + ATP + H2O = L-glutaminyl-tRNA(Gln) + L-glutamate + ADP + phosphate + H(+). The catalysed reaction is L-aspartyl-tRNA(Asn) + L-glutamine + ATP + H2O = L-asparaginyl-tRNA(Asn) + L-glutamate + ADP + phosphate + 2 H(+). Functionally, allows the formation of correctly charged Asn-tRNA(Asn) or Gln-tRNA(Gln) through the transamidation of misacylated Asp-tRNA(Asn) or Glu-tRNA(Gln) in organisms which lack either or both of asparaginyl-tRNA or glutaminyl-tRNA synthetases. The reaction takes place in the presence of glutamine and ATP through an activated phospho-Asp-tRNA(Asn) or phospho-Glu-tRNA(Gln). This chain is Aspartyl/glutamyl-tRNA(Asn/Gln) amidotransferase subunit B, found in Lactiplantibacillus plantarum (strain ATCC BAA-793 / NCIMB 8826 / WCFS1) (Lactobacillus plantarum).